The sequence spans 214 residues: uncharacterized protein (214 aa).

This is an uncharacterized protein from Methanocaldococcus jannaschii (strain ATCC 43067 / DSM 2661 / JAL-1 / JCM 10045 / NBRC 100440) (Methanococcus jannaschii).